Reading from the N-terminus, the 156-residue chain is Endoribonuclease YbeY (156 aa).

Zn(2+)-binding residues include histidine 111, histidine 115, and histidine 121.

Belongs to the endoribonuclease YbeY family. The cofactor is Zn(2+).

It localises to the cytoplasm. Its function is as follows. Single strand-specific metallo-endoribonuclease involved in late-stage 70S ribosome quality control and in maturation of the 3' terminus of the 16S rRNA. This Hahella chejuensis (strain KCTC 2396) protein is Endoribonuclease YbeY.